The chain runs to 199 residues: Recombination protein RecR (199 aa).

The C4-type zinc-finger motif lies at 58 to 73 (CKTCGNIDTQSPCTVC). The 96-residue stretch at 81–176 (AMIVVVADVA…KVTRLAHGVP (96 aa)) folds into the Toprim domain.

The protein belongs to the RecR family.

Functionally, may play a role in DNA repair. It seems to be involved in an RecBC-independent recombinational process of DNA repair. It may act with RecF and RecO. This Bradyrhizobium sp. (strain BTAi1 / ATCC BAA-1182) protein is Recombination protein RecR.